The primary structure comprises 723 residues: MSMFNKVVKEFQWGQHKVRMETGEIARQAGGAVLVDVEDTVVLATVVAAKSPKPGQDFFPLTVDYIEKTYAAGKIPGGFFKREGRPSENETLTSRLIDRPLRPLFPEGFYNDVQVVVHVVSLNPEVPADIPALIGASAALAVSGIPFNGPVGAARVGYKDGQYLLNPTRSQIATSDLDLVVAGTERAVLMVESEANQLSEDVMLGAVVYGHEQMQTAINAIHELVREGGKPEWDWAPAAKNEPLIAKVTEVALPLLQEAYQLRQKSARSQKLKEVSANVAAALAEAGVEADKVEVGNIMFDLEAKIVRGQILNGEPRIDGRDTRTVRPIEIRSSVLPRAHGSALFTRGETQALVVATLGTKSDEQIIDALAGEYRDRFMLHYNMPPFATGETGRVGSPKRREIGHGRLAKRALIPVLPKEDEFAYTIRLVSEITESNGSSSMASVCGGCLALMDAGVPVKAHVAGVAMGLILEGNKFAVLTDILGDEDHLGDMDFKVAGTDNGITALQMDIKVQGITKEIMQVALAQAKEGRLHILSNMQEAMGHARTELSAHAPRMITMKIHPDKIREVIGKGGSTIQALTKETGTTIDIQEDGTITIASTSTEGMAEAKRRIEGITAEAEVGKIYAGTVLKLLDFGAIVNILPGKDGLLHISEIVNERVKDIKDWLKEGQQVRVKLIQADEKGRLRLSLKAALAEEGGSISPINAGESAAPAAPAGGSEQQ.

The Mg(2+) site is built by aspartate 488 and aspartate 494. The 60-residue stretch at 555-614 (PRMITMKIHPDKIREVIGKGGSTIQALTKETGTTIDIQEDGTITIASTSTEGMAEAKRRI) folds into the KH domain. An S1 motif domain is found at 624-692 (GKIYAGTVLK…EKGRLRLSLK (69 aa)). A disordered region spans residues 701–723 (SISPINAGESAAPAAPAGGSEQQ). Residues 707–723 (AGESAAPAAPAGGSEQQ) are compositionally biased toward low complexity.

Belongs to the polyribonucleotide nucleotidyltransferase family. Mg(2+) is required as a cofactor.

It localises to the cytoplasm. It catalyses the reaction RNA(n+1) + phosphate = RNA(n) + a ribonucleoside 5'-diphosphate. Its function is as follows. Involved in mRNA degradation. Catalyzes the phosphorolysis of single-stranded polyribonucleotides processively in the 3'- to 5'-direction. The protein is Polyribonucleotide nucleotidyltransferase of Cupriavidus taiwanensis (strain DSM 17343 / BCRC 17206 / CCUG 44338 / CIP 107171 / LMG 19424 / R1) (Ralstonia taiwanensis (strain LMG 19424)).